A 251-amino-acid chain; its full sequence is UPF0246 protein DSY0297 (251 aa).

Belongs to the UPF0246 family.

The sequence is that of UPF0246 protein DSY0297 from Desulfitobacterium hafniense (strain Y51).